A 250-amino-acid chain; its full sequence is MSTSAADTLSRPSVRPAGRAVDALRPFSLERGFTRYAEGSVLVRAGNTHVLCTASVLEKVPPFLKGRGEGWVTAEYGMLPRATHTRGDREAARGKQSGRTQEIQRLIGRSLRAVFDLRLLGERTLHLDCDVLQADGGTRCASITGAWVAAADAVALLMQRGDLAHNPIRDAVAAVSVGLVDGRAVLDLDYQEDSACAADVNVVMTGSGAFVEVQGTGEGATFTRGELDTMLGLAEGGIAQLVRAQREALQ.

Phosphate contacts are provided by residues R99 and 137–139 (GTR).

Belongs to the RNase PH family. In terms of assembly, homohexameric ring arranged as a trimer of dimers.

It carries out the reaction tRNA(n+1) + phosphate = tRNA(n) + a ribonucleoside 5'-diphosphate. Functionally, phosphorolytic 3'-5' exoribonuclease that plays an important role in tRNA 3'-end maturation. Removes nucleotide residues following the 3'-CCA terminus of tRNAs; can also add nucleotides to the ends of RNA molecules by using nucleoside diphosphates as substrates, but this may not be physiologically important. Probably plays a role in initiation of 16S rRNA degradation (leading to ribosome degradation) during starvation. The chain is Ribonuclease PH from Bordetella parapertussis (strain 12822 / ATCC BAA-587 / NCTC 13253).